The chain runs to 419 residues: Histidine--tRNA ligase (419 aa).

The protein belongs to the class-II aminoacyl-tRNA synthetase family. Homodimer.

The protein resides in the cytoplasm. The catalysed reaction is tRNA(His) + L-histidine + ATP = L-histidyl-tRNA(His) + AMP + diphosphate + H(+). The sequence is that of Histidine--tRNA ligase from Methylobacillus flagellatus (strain ATCC 51484 / DSM 6875 / VKM B-1610 / KT).